The following is a 276-amino-acid chain: Small ribosomal subunit protein uS3 (276 aa).

The KH type-2 domain occupies 38 to 106; sequence IRRMMTKGME…QVQLNILEVK (69 aa). The span at 216-228 shows a compositional bias: low complexity; that stretch reads NAAARAGNRPARG. A disordered region spans residues 216-276; it reads NAAARAGNRP…PAAESTGTEA (61 aa). The segment covering 229-245 has biased composition (basic and acidic residues); it reads GADRPAGRGGRGGERGG. A compositionally biased stretch (low complexity) spans 254–269; it reads PAAEAPKADAAAAPAA.

Belongs to the universal ribosomal protein uS3 family. Part of the 30S ribosomal subunit. Forms a tight complex with proteins S10 and S14.

Its function is as follows. Binds the lower part of the 30S subunit head. Binds mRNA in the 70S ribosome, positioning it for translation. This Streptomyces griseus subsp. griseus (strain JCM 4626 / CBS 651.72 / NBRC 13350 / KCC S-0626 / ISP 5235) protein is Small ribosomal subunit protein uS3.